The sequence spans 216 residues: NADH-quinone oxidoreductase subunit C (216 aa).

It belongs to the complex I 30 kDa subunit family. As to quaternary structure, NDH-1 is composed of 14 different subunits. Subunits NuoB, C, D, E, F, and G constitute the peripheral sector of the complex.

It localises to the cell inner membrane. It carries out the reaction a quinone + NADH + 5 H(+)(in) = a quinol + NAD(+) + 4 H(+)(out). Functionally, NDH-1 shuttles electrons from NADH, via FMN and iron-sulfur (Fe-S) centers, to quinones in the respiratory chain. The immediate electron acceptor for the enzyme in this species is believed to be ubiquinone. Couples the redox reaction to proton translocation (for every two electrons transferred, four hydrogen ions are translocated across the cytoplasmic membrane), and thus conserves the redox energy in a proton gradient. The sequence is that of NADH-quinone oxidoreductase subunit C from Francisella tularensis subsp. holarctica (strain OSU18).